A 132-amino-acid chain; its full sequence is Phosphomevalonate dehydratase small subunit (132 aa).

The Proton acceptor role is filled by serine 62.

Belongs to the AcnX type II small subunit family. Heterodimer composed of a large subunit (PMDh-L) and a small subunit (PMDh-S).

It carries out the reaction (R)-5-phosphomevalonate = (2E)-3-methyl-5-phosphooxypent-2-enoate + H2O. It participates in isoprenoid biosynthesis; isopentenyl diphosphate biosynthesis via mevalonate pathway. In terms of biological role, component of a hydro-lyase that catalyzes the dehydration of mevalonate 5-phosphate (MVA5P) to form trans-anhydromevalonate 5-phosphate (tAHMP). Involved in the archaeal mevalonate (MVA) pathway, which provides fundamental precursors for isoprenoid biosynthesis, such as isopentenyl diphosphate (IPP) and dimethylallyl diphosphate (DMAPP). The polypeptide is Phosphomevalonate dehydratase small subunit (Methanocella arvoryzae (strain DSM 22066 / NBRC 105507 / MRE50)).